Reading from the N-terminus, the 729-residue chain is Anti-bacteriophage protein B (729 aa).

One can recognise a Helicase ATP-binding domain in the interval 109 to 271 (FDLLKSGQNV…KLGYPHTFVS (163 aa)). 122–129 (APTSMGKS) lines the ATP pocket. Residues 297-472 (ALGEIAHACV…GIDTPINLLA (176 aa)) form the Helicase C-terminal domain.

This sequence belongs to the helicase family. As to quaternary structure, interacts with AbpB.

In terms of biological role, part of an antiviral system composed of AbpA and AbpB; when both are expressed from a plasmid they confer resistance to phages T2, T4, T7 and lambda but not RB32 or RB69. Resistance is temperature dependent, it can be seen at 30 degrees Celsius but not at 37 or 42 degrees Celsius. The system impairs phage but not bacterial DNA synthesis (shown for T4, T7 and lambda). Partially suppressed by mutations in T4 gene 41, a replicative helicase. Deletion or mutations in this gene were selected in directed evolution experiments for resistance to intense ionizing radiation (3000 Gy). The polypeptide is Anti-bacteriophage protein B (Escherichia coli (strain K12)).